The chain runs to 973 residues: Putative cell agglutination protein pfl3 (973 aa).

An N-terminal signal peptide occupies residues 1-24; the sequence is MSLFPQILLRLLFLAFTLKSTSNA. Asn75, Asn96, Asn147, Asn171, Asn184, Asn218, and Asn253 each carry an N-linked (GlcNAc...) asparagine glycan. 18 repeat units span residues 198-232, 233-267, 268-302, 303-337, 338-372, 373-407, 408-442, 443-477, 478-512, 513-547, 548-582, 583-617, 618-652, 653-687, 688-722, 723-757, 758-792, and 793-828. The interval 198–828 is 18 X 35 AA approximate tandem repeats; the sequence is GTITLTTISG…GTVLQVVPSL (631 aa). N-linked (GlcNAc...) asparagine glycans are attached at residues Asn352 and Asn393. Residues 820-973 enclose the DIPSY domain; it reads TVLQVVPSLF…SNVYFKAVPL (154 aa). N-linked (GlcNAc...) asparagine glycosylation is present at Asn848.

This sequence belongs to the mam3/map4 family.

The protein resides in the cell surface. Its function is as follows. May be involved in agglutination during conjugation or other aspects of colony formation. Induces flocculation when overexpressed. The polypeptide is Putative cell agglutination protein pfl3 (Schizosaccharomyces pombe (strain 972 / ATCC 24843) (Fission yeast)).